Here is a 67-residue protein sequence, read N- to C-terminus: Small ribosomal subunit protein bS21 (67 aa).

This sequence belongs to the bacterial ribosomal protein bS21 family.

This Granulibacter bethesdensis (strain ATCC BAA-1260 / CGDNIH1) protein is Small ribosomal subunit protein bS21.